We begin with the raw amino-acid sequence, 667 residues long: Fermitin family homolog 3 (667 aa).

Position 8 is a phosphoserine (Ser8). Tyr11 is subject to Phosphotyrosine. Positions 229–558 constitute an FERM domain; sequence WLDSSRCLMQ…SLPDFGISYV (330 aa). The region spanning 354–457 is the PH domain; the sequence is DHLRIFRIPR…WMAGCRLASK (104 aa). Position 504 is a phosphotyrosine (Tyr504). Position 591 is a phosphothreonine (Thr591).

Belongs to the kindlin family. In terms of assembly, interacts with ITGB1, ITGB2 and ITGB3 (via cytoplasmic tails). In terms of tissue distribution, highly expressed in lymph node. Expressed in thymus, spleen and leukocytes. Weakly expressed in placenta, small intestine, stomach, testis and lung. Overexpressed in B-cell malignancies.

The protein localises to the cell projection. It localises to the podosome. In terms of biological role, plays a central role in cell adhesion in hematopoietic cells. Acts by activating the integrin beta-1-3 (ITGB1, ITGB2 and ITGB3). Required for integrin-mediated platelet adhesion and leukocyte adhesion to endothelial cells. Required for activation of integrin beta-2 (ITGB2) in polymorphonuclear granulocytes (PMNs). Isoform 2 may act as a repressor of NF-kappa-B and apoptosis. This Homo sapiens (Human) protein is Fermitin family homolog 3 (FERMT3).